Here is a 517-residue protein sequence, read N- to C-terminus: Maturase K (517 aa).

It belongs to the intron maturase 2 family. MatK subfamily.

It is found in the plastid. Its subcellular location is the chloroplast. In terms of biological role, usually encoded in the trnK tRNA gene intron. Probably assists in splicing its own and other chloroplast group II introns. In Veronica arvensis (Wall speedwell), this protein is Maturase K.